An 841-amino-acid chain; its full sequence is Translation initiation factor IF-2 (841 aa).

Residues 94 to 255 (QRSPEEIEAE…RNAHGFQSPT (162 aa)) are disordered. Residues 96–135 (SPEEIEAERKREMDERRAVENAARQKAEEEAKRRAEEDAR) show a composition bias toward basic and acidic residues. Residues 136–175 (NQPAAGQPASAPAQPVAAAEPVREAPAAAAPAPASAAPSA) are compositionally biased toward low complexity. 2 stretches are compositionally biased toward basic and acidic residues: residues 176–217 (DARK…EKAP) and 225–234 (TTDEESDSFR). Residues 235–248 (RGGRGKGKLKKRNA) show a composition bias toward basic residues. The 170-residue stretch at 341-510 (SRAPVVTVMG…LLQAEVLELK (170 aa)) folds into the tr-type G domain. A G1 region spans residues 350 to 357 (GHVDHGKT). 350-357 (GHVDHGKT) provides a ligand contact to GTP. Residues 375 to 379 (GITQH) are G2. The segment at 396–399 (DTPG) is G3. Residues 396-400 (DTPGH) and 450-453 (NKID) each bind GTP. The interval 450 to 453 (NKID) is G4. Residues 486 to 488 (SAK) are G5.

The protein belongs to the TRAFAC class translation factor GTPase superfamily. Classic translation factor GTPase family. IF-2 subfamily.

The protein resides in the cytoplasm. One of the essential components for the initiation of protein synthesis. Protects formylmethionyl-tRNA from spontaneous hydrolysis and promotes its binding to the 30S ribosomal subunits. Also involved in the hydrolysis of GTP during the formation of the 70S ribosomal complex. This chain is Translation initiation factor IF-2, found in Pseudomonas syringae pv. tomato (strain ATCC BAA-871 / DC3000).